The following is a 131-amino-acid chain: Large ribosomal subunit protein eL32 (131 aa).

The protein belongs to the eukaryotic ribosomal protein eL32 family.

The polypeptide is Large ribosomal subunit protein eL32 (RPL32) (Eremothecium gossypii (strain ATCC 10895 / CBS 109.51 / FGSC 9923 / NRRL Y-1056) (Yeast)).